Here is a 581-residue protein sequence, read N- to C-terminus: LRLLLTTSVLRLARAANPFVAQQTPPDPCYDESGAPRRCIPEFVNAAFGKEVQASSTCGKPPTRHCDASDPRRAHPPAYLTDLNTAANMTCWRSETLHHLPHNVTLTLSLGKKFEVVYVSLQFCSPRPESTAIFKSMDYGKTWVPYQYYSSQCRKIYGKPSKATVTKQNEQEALCTDGLTDLYPLTGGLIAFSTLDGRPSAQDFDSSPVLQDWVTATDIRVVFSRPHLFRELGGREAGEEDGGAGATPYYYSVGELQVGGRCKCNGHASRCVKDKEQKLVCDCKHNTEGPECDRCKPFHYDRPWQRASAREANECLACNCNLHARRCRFNMELYKLSGRKSGGVCLNCRHNTAGRHCHYCKEGFYRDLSKSITDRKACKACDCHPVGAAGKTCNQTTGQCPCKDGVTGLTCNRCAKGFQQSRSPVAPCIKIPAINPTSLVTSTEAPADCDSYCKPAKGNYKINMKKYCKKDYVVQVNILEMETVANWAKFTINILSVYKCRDERVKRGDNFLWIHLKDLSCKCPKIQISKKYLVMGISENSTDRPGLMADKNSLVIQWRDAWTRRLRKLQRREKKGKCVKP.

A signal peptide spans 1–15 (LRLLLTTSVLRLARA). The Laminin N-terminal domain maps to 35 to 261 (APRRCIPEFV…SVGELQVGGR (227 aa)). 2 N-linked (GlcNAc...) asparagine glycosylation sites follow: Asn88 and Asn103. Disulfide bonds link Cys91–Cys124, Cys262–Cys271, Cys264–Cys281, Cys283–Cys292, Cys295–Cys315, Cys318–Cys327, Cys320–Cys345, Cys348–Cys357, Cys360–Cys378, Cys381–Cys393, Cys383–Cys400, Cys402–Cys411, Cys414–Cys428, Cys449–Cys521, and Cys468–Cys578. Laminin EGF-like domains lie at 262–317 (CKCN…ECLA), 318–380 (CNCN…ACKA), and 381–430 (CDCH…PCIK). N-linked (GlcNAc...) asparagine glycosylation occurs at Asn394. The NTR domain occupies 449-578 (CDSYCKPAKG…LQRREKKGKC (130 aa)). Positions 507-509 (RGD) match the Cell attachment site motif. Asn540 carries an N-linked (GlcNAc...) asparagine glycan.

Its subcellular location is the secreted. The protein localises to the extracellular space. It localises to the extracellular matrix. Its function is as follows. Netrins control guidance of CNS commissural axons and peripheral motor axons. The protein is Netrin-3 (NTN3) of Gallus gallus (Chicken).